We begin with the raw amino-acid sequence, 206 residues long: MPSRRRTLLKVIILGDSGVGKTSLMNQYVNKKFSNQYKATIGADFLTKEVQFEDRLFTLQIWDTAGQERFQSLGVAFYRGADCCVLVYDVNSAKSFEDLNNWREEFLIQASPSDPENFPFVVIGNKIDVDGGSSRVVSEKKARAWCASKGNIPYYETSAKVGTNVEDAFLCITTNAMKSGEEEEMYLPDTIDVGTSNPQRSTGCEC.

15–22 (GDSGVGKT) is a binding site for GTP. Positions 37-45 (YKATIGADF) match the Effector region motif. GTP-binding positions include 63-67 (DTAGQ), 125-128 (NKID), and 158-159 (SA). Residues Cys204 and Cys206 are each lipidated (S-geranylgeranyl cysteine). Cys206 bears the Cysteine methyl ester mark.

It belongs to the small GTPase superfamily. Rab family.

It is found in the cell membrane. Functionally, intracellular vesicle trafficking and protein transport. May play a role in adaptation to stress by recylcing macromolecules in specific cellular compartments. This is Ras-related protein RABG3e (RABG3E) from Arabidopsis thaliana (Mouse-ear cress).